The sequence spans 96 residues: UPF0235 protein ESA_00387 (96 aa).

This sequence belongs to the UPF0235 family.

This is UPF0235 protein ESA_00387 from Cronobacter sakazakii (strain ATCC BAA-894) (Enterobacter sakazakii).